Consider the following 282-residue polypeptide: Undecaprenyl-diphosphatase (282 aa).

6 helical membrane-spanning segments follow: residues 90-110, 121-141, 165-185, 194-214, 228-248, and 256-276; these read YRLG…GLLF, LWVV…AEYL, LALV…LFLG, FGFL…LPDA, QLLV…SWFL, and MYWF…LLAT.

Belongs to the UppP family.

Its subcellular location is the cell membrane. It carries out the reaction di-trans,octa-cis-undecaprenyl diphosphate + H2O = di-trans,octa-cis-undecaprenyl phosphate + phosphate + H(+). In terms of biological role, catalyzes the dephosphorylation of undecaprenyl diphosphate (UPP). Confers resistance to bacitracin. The polypeptide is Undecaprenyl-diphosphatase (Mycobacterium marinum (strain ATCC BAA-535 / M)).